An 878-amino-acid chain; its full sequence is Probable ATP-dependent RNA helicase ddx10 (878 aa).

The segment covering M1–N15 has biased composition (basic and acidic residues). 2 disordered regions span residues M1–V53 and R102–E130. A compositionally biased stretch (low complexity) spans N16–T30. The span at E31–V53 shows a compositional bias: basic and acidic residues. Positions R102–S112 are enriched in polar residues. Over residues T113–T123 the composition is skewed to low complexity. Residues T141 to R169 carry the Q motif motif. ATP is bound by residues F161–K163, Q168, and A185–T192. The 175-residue stretch at L172 to I346 folds into the Helicase ATP-binding domain. The DEAD box signature appears at D294–D297. The 150-residue stretch at K372 to V521 folds into the Helicase C-terminal domain. Residues D608–D618 show a composition bias toward basic and acidic residues. Disordered stretches follow at residues D608 to A675 and L781 to I878. The segment covering S635–D652 has biased composition (acidic residues). Residues N665–N674 show a composition bias toward basic and acidic residues. Residues E816–E850 are compositionally biased toward acidic residues. Residues R860–A869 show a composition bias toward basic and acidic residues.

Belongs to the DEAD box helicase family. DDX10/DBP4 subfamily.

The protein localises to the nucleus. The protein resides in the nucleolus. It catalyses the reaction ATP + H2O = ADP + phosphate + H(+). Functionally, probable ATP-dependent RNA helicase which may be involved in ribosome biogenesis. The protein is Probable ATP-dependent RNA helicase ddx10 (ddx10) of Dictyostelium discoideum (Social amoeba).